Consider the following 45-residue polypeptide: Large ribosomal subunit protein bL34 (45 aa).

Belongs to the bacterial ribosomal protein bL34 family.

This is Large ribosomal subunit protein bL34 from Kineococcus radiotolerans (strain ATCC BAA-149 / DSM 14245 / SRS30216).